The following is a 357-amino-acid chain: MATVKGGRVAVIGASGYGGLQTIRLLQGHPGLSVSFLGGERSAGQRWSSVCSFLPLPDDPKVESADPDRIAACSDFAVLSLPNGLACQLAPQLLERGVRVVDLSADFRYRSLEQWLQVYAKEAGSLNRQDAELCSSAVYGLPEWNGPAIADAKLVAAPGCFPTASLMPLLPFLKQGLIETSGIIIDAKTGTSGGGRVPKEAMLLAEASESIAPYGVIGHRHTSEIEQMAMEVAGQDIRLQFTPHLVPMVRGLLSTVYARLRDPGLTAEDCTTVLEAIYRHHPCVQVLPVGTYPATKWARHTNRALLSVQVDTRTGQLVLMSAIDNLIKGQAGQGVQCINLMAGLAPETGLPLQSFYP.

Residue C160 is part of the active site.

The protein belongs to the NAGSA dehydrogenase family. Type 1 subfamily.

It localises to the cytoplasm. The catalysed reaction is N-acetyl-L-glutamate 5-semialdehyde + phosphate + NADP(+) = N-acetyl-L-glutamyl 5-phosphate + NADPH + H(+). It functions in the pathway amino-acid biosynthesis; L-arginine biosynthesis; N(2)-acetyl-L-ornithine from L-glutamate: step 3/4. Its function is as follows. Catalyzes the NADPH-dependent reduction of N-acetyl-5-glutamyl phosphate to yield N-acetyl-L-glutamate 5-semialdehyde. This Synechococcus sp. (strain CC9605) protein is N-acetyl-gamma-glutamyl-phosphate reductase.